We begin with the raw amino-acid sequence, 292 residues long: Probable vesicular-fusion protein sec17 homolog (292 aa).

Belongs to the SNAP family.

The protein resides in the membrane. In terms of biological role, required for vesicular transport between the endoplasmic reticulum and the Golgi apparatus. The polypeptide is Probable vesicular-fusion protein sec17 homolog (Neurospora crassa (strain ATCC 24698 / 74-OR23-1A / CBS 708.71 / DSM 1257 / FGSC 987)).